A 510-amino-acid polypeptide reads, in one-letter code: tRNA-2-methylthio-N(6)-dimethylallyladenosine synthase (510 aa).

In terms of domain architecture, MTTase N-terminal spans 19 to 144; the sequence is RTYQVRTFGC…LPVLLERARH (126 aa). Positions 28, 73, 107, 181, 185, and 188 each coordinate [4Fe-4S] cluster. One can recognise a Radical SAM core domain in the interval 167–397; the sequence is RESPYAAWVS…TALQDRITYE (231 aa). Residues 400–470 enclose the TRAM domain; it reads QAQTGRTLEV…PHYLEADDVS (71 aa). The span at 482-492 shows a compositional bias: basic and acidic residues; the sequence is AWEARQARPEP. Residues 482–510 are disordered; that stretch reads AWEARQARPEPESTGPRPVGLGLPTLRRA.

The protein belongs to the methylthiotransferase family. MiaB subfamily. Monomer. Requires [4Fe-4S] cluster as cofactor.

It localises to the cytoplasm. The catalysed reaction is N(6)-dimethylallyladenosine(37) in tRNA + (sulfur carrier)-SH + AH2 + 2 S-adenosyl-L-methionine = 2-methylsulfanyl-N(6)-dimethylallyladenosine(37) in tRNA + (sulfur carrier)-H + 5'-deoxyadenosine + L-methionine + A + S-adenosyl-L-homocysteine + 2 H(+). In terms of biological role, catalyzes the methylthiolation of N6-(dimethylallyl)adenosine (i(6)A), leading to the formation of 2-methylthio-N6-(dimethylallyl)adenosine (ms(2)i(6)A) at position 37 in tRNAs that read codons beginning with uridine. This Kineococcus radiotolerans (strain ATCC BAA-149 / DSM 14245 / SRS30216) protein is tRNA-2-methylthio-N(6)-dimethylallyladenosine synthase.